Here is a 272-residue protein sequence, read N- to C-terminus: Cytochrome c oxidase subunit 3 (272 aa).

7 helical membrane passes run 23-43 (PWPF…VMYM), 45-65 (AYVN…LVMF), 91-111 (FGVI…FWAF), 137-157 (WEIP…VTWC), 169-189 (SVLS…FQAY), 210-230 (ATGF…VCLI), and 249-269 (AWYW…IYWW).

Belongs to the cytochrome c oxidase subunit 3 family. As to quaternary structure, component of the cytochrome c oxidase (complex IV, CIV), a multisubunit enzyme composed of a catalytic core of 3 subunits and several supernumerary subunits. The complex exists as a monomer or a dimer and forms supercomplexes (SCs) in the inner mitochondrial membrane with ubiquinol-cytochrome c oxidoreductase (cytochrome b-c1 complex, complex III, CIII).

The protein resides in the mitochondrion inner membrane. It carries out the reaction 4 Fe(II)-[cytochrome c] + O2 + 8 H(+)(in) = 4 Fe(III)-[cytochrome c] + 2 H2O + 4 H(+)(out). Functionally, component of the cytochrome c oxidase, the last enzyme in the mitochondrial electron transport chain which drives oxidative phosphorylation. The respiratory chain contains 3 multisubunit complexes succinate dehydrogenase (complex II, CII), ubiquinol-cytochrome c oxidoreductase (cytochrome b-c1 complex, complex III, CIII) and cytochrome c oxidase (complex IV, CIV), that cooperate to transfer electrons derived from NADH and succinate to molecular oxygen, creating an electrochemical gradient over the inner membrane that drives transmembrane transport and the ATP synthase. Cytochrome c oxidase is the component of the respiratory chain that catalyzes the reduction of oxygen to water. Electrons originating from reduced cytochrome c in the intermembrane space (IMS) are transferred via the dinuclear copper A center (CU(A)) of subunit 2 and heme A of subunit 1 to the active site in subunit 1, a binuclear center (BNC) formed by heme A3 and copper B (CU(B)). The BNC reduces molecular oxygen to 2 water molecules using 4 electrons from cytochrome c in the IMS and 4 protons from the mitochondrial matrix. The polypeptide is Cytochrome c oxidase subunit 3 (COX3) (Chondrus crispus (Carrageen Irish moss)).